Reading from the N-terminus, the 308-residue chain is ATP synthase gamma chain (308 aa).

Belongs to the ATPase gamma chain family. F-type ATPases have 2 components, CF(1) - the catalytic core - and CF(0) - the membrane proton channel. CF(1) has five subunits: alpha(3), beta(3), gamma(1), delta(1), epsilon(1). CF(0) has three main subunits: a, b and c.

It localises to the cell inner membrane. In terms of biological role, produces ATP from ADP in the presence of a proton gradient across the membrane. The gamma chain is believed to be important in regulating ATPase activity and the flow of protons through the CF(0) complex. This chain is ATP synthase gamma chain, found in Bartonella tribocorum (strain CIP 105476 / IBS 506).